The chain runs to 156 residues: Small ribosomal subunit protein uS7 (156 aa).

The protein belongs to the universal ribosomal protein uS7 family. As to quaternary structure, part of the 30S ribosomal subunit. Contacts proteins S9 and S11.

One of the primary rRNA binding proteins, it binds directly to 16S rRNA where it nucleates assembly of the head domain of the 30S subunit. Is located at the subunit interface close to the decoding center, probably blocks exit of the E-site tRNA. This is Small ribosomal subunit protein uS7 from Methylorubrum populi (strain ATCC BAA-705 / NCIMB 13946 / BJ001) (Methylobacterium populi).